The sequence spans 321 residues: Serine/threonine-protein phosphatase 4 catalytic subunit 2 (321 aa).

Mn(2+) contacts are provided by aspartate 64, histidine 66, aspartate 92, and asparagine 124. Residue histidine 125 is the Proton donor of the active site. Mn(2+) is bound by residues histidine 174 and histidine 249.

The protein belongs to the PPP phosphatase family. PP-4 (PP-X) subfamily. As to quaternary structure, serine/threonine-protein phosphatase 4 (PP4) occurs in different assemblies of the catalytic and one or more regulatory subunits. It depends on Mn(2+) as a cofactor.

It catalyses the reaction O-phospho-L-seryl-[protein] + H2O = L-seryl-[protein] + phosphate. It carries out the reaction O-phospho-L-threonyl-[protein] + H2O = L-threonyl-[protein] + phosphate. Its function is as follows. Protein phosphatase which seems to be involved in larval development but not essential for embryogenesis. The chain is Serine/threonine-protein phosphatase 4 catalytic subunit 2 from Caenorhabditis elegans.